The primary structure comprises 252 residues: Neurovirulence factor ICP34.5 (252 aa).

The segment covering 1-15 (MARRRRRHRGPRRPR) has biased composition (basic residues). The tract at residues 1–17 (MARRRRRHRGPRRPRPP) is required for nucleolar localization. 2 disordered regions span residues 1–129 (MARR…PFRL) and 150–179 (RRAGGEGAPEPPATPATPATPATPATPATP). Residues 25–36 (TAQSQVTSTPNS) are compositionally biased toward polar residues. Residues 46–59 (AAPPPPPAGGPPPS) are compositionally biased toward pro residues. Residues 74–84 (ASDDDDDDDWP) show a composition bias toward acidic residues. Composition is skewed to pro residues over residues 85-94 (DSPPPEPAPE) and 120-129 (SHPPSRPFRL). The Nuclear export signal motif lies at 129 to 138 (LPPRLALRLR). Tandem repeats lie at residues 162-164 (ATP), 165-167 (ATP), 168-170 (ATP), 171-173 (ATP), 174-176 (ATP), and 177-179 (ATP). Residues 162 to 179 (ATPATPATPATPATPATP) form a 6 X 3 AA tandem repeats of A-T-P region. A compositionally biased stretch (low complexity) spans 165 to 179 (ATPATPATPATPATP). Residues 179-192 (PARVRFSPHVRVRH) form a binding to PP1CA region. The interval 179–192 (PARVRFSPHVRVRH) is interaction with host PPP1CA. Residues 194 to 252 (VVWASAARLARRGSWARERADRARFRRRVAEAEAVIGPCLGPKARARALARGAGPANSV) form an important for interferon resistance region. Residues 204 to 222 (RRGSWARERADRARFRRRV) carry the Bipartite nuclear localization signal motif. Residues 222-237 (VAEAEAVIGPCLGPKA) form an interaction with host EIF2S1/EIF-2ALPHA region.

Belongs to the PPP1R15 family. As to quaternary structure, interacts with host PPP1CA to form a high-molecular-weight complex that dephosphorylates EIF2S1/eIF-2alpha. Interacts with host EIF2S1/eIF-2alpha; this interaction is crucial for the specific dephosphorylation of EIF2S1/eIF-2alpha by PPP1CA. Binds to proliferating cell nuclear antigen (PCNA), which may release host cells from growth arrest and facilitate viral replication. Interacts (via N-terminus) with host C1QBP and PRKCA. Interacts with protein UL31. Interacts with host TBK1. Interacts with host STING/TMEM173; this interaction inhibits the intracellular DNA sensing pathway. Interacts with host BECN1; this interaction modulates host autophagy.

It is found in the host cytoplasm. The protein resides in the host nucleus. The protein localises to the host nucleolus. It localises to the virion. Inhibits the establishment of the immune response and of the integrated stress response (ISR) in the infected cell. Plays essential roles in viral nuclear egress to mediate capsid transit across the nuclear membrane. Facilitates nuclear egress cooperatively with host C1QBP and protein kinase C/PKC to induce lamin A/C phosphorylation and subsequent reorganization. In turn, lamina disassembles and nuclear egress occurs. Recruits the serine/threonine protein phosphatase PPP1CA/PP1-alpha to dephosphorylate the translation initiation factor EIF2S1/eIF-2alpha, thereby couteracting the host shutoff of protein synthesis involving double-stranded RNA-dependent protein kinase EIF2AK2/PKR. In turn, controls host IRF3 activation and subsequently inhibits host interferon response. Controls the DNA sensing pathway by interacting with and inhibiting host STING/TMEM173. Also down-modulates the host MHC class II proteins cell surface expression. Acts as a neurovirulence factor that has a profound effect on the growth of the virus in central nervous system tissue, by interacting with host BECN1 and thereby antagonizing the host autophagy response. The chain is Neurovirulence factor ICP34.5 (RL1) from Human herpesvirus 1 (strain CVG-2) (HHV-1).